Reading from the N-terminus, the 318-residue chain is NF-kappa-B inhibitor alpha (318 aa).

A disordered region spans residues 1-44; the sequence is MLSAHRPAEPPAVEGCEPPRKERQGGLLPPDDRHDSGLDSMKEE. The segment covering 17–44 has biased composition (basic and acidic residues); that stretch reads EPPRKERQGGLLPPDDRHDSGLDSMKEE. A Glycyl lysine isopeptide (Lys-Gly) (interchain with G-Cter in ubiquitin) cross-link involves residue Lys21. Ser36 bears the Phosphoserine; by IKKA and IKKB mark. At Ser40 the chain carries Phosphoserine; by IKKA, IKKB and IKKE. Tyr46 bears the Phosphotyrosine; by Tyr-kinases mark. ANK repeat units follow at residues 114 to 143, 147 to 176, 186 to 215, and 220 to 249; these read LSQT…DLDV, RGNT…PHHL, NGHT…DVNA, and NGRT…DVNK.

The protein belongs to the NF-kappa-B inhibitor family. Phosphorylated at Ser-36 and Ser-40 by IKKA/CHUK and IKKB/IKBKB; disables inhibition of NF-kappa-B DNA-binding activity. Phosphorylation at positions 36 and 40 is prerequisite to polyubiquitination and subsequent degradation. In terms of processing, monoubiquitinated at Lys-21 following phosphorylation at Ser-36 and Ser-40. The resulting polyubiquitination leads to protein degradation. Post-translationally, hydroxylated by HIF1AN. Highly expressed in lymph node, thymus followed by liver, brain, muscle, kidney, gastrointestinal and reproductive tract.

The protein localises to the cytoplasm. It is found in the nucleus. Functionally, inhibits the activity of dimeric NF-kappa-B/REL complexes by trapping REL (RELA/p65 and NFKB1/p50) dimers in the cytoplasm by masking their nuclear localization signals. On cellular stimulation by immune and pro-inflammatory responses, becomes phosphorylated promoting ubiquitination and degradation, enabling the dimeric RELA to translocate to the nucleus and activate transcription. The polypeptide is NF-kappa-B inhibitor alpha (NFKBIA) (Gallus gallus (Chicken)).